The sequence spans 411 residues: RING-H2 finger protein ATL65 (411 aa).

The tract at residues 1 to 32 (MRFVAPPPRSGDNSPSPSPSSGISEEILSRSS) is disordered. Low complexity predominate over residues 10–21 (SGDNSPSPSPSS). The helical transmembrane segment at 36–56 (LEFSPPLIAMVVVLAAAFLFV) threads the bilayer. The segment at 156-198 (CAVCLLEFEEGDYVRTLPLCFHAFHLECIDEWLRSHPNCPLCR) adopts an RING-type; atypical zinc-finger fold.

It belongs to the RING-type zinc finger family. ATL subfamily.

Its subcellular location is the membrane. It carries out the reaction S-ubiquitinyl-[E2 ubiquitin-conjugating enzyme]-L-cysteine + [acceptor protein]-L-lysine = [E2 ubiquitin-conjugating enzyme]-L-cysteine + N(6)-ubiquitinyl-[acceptor protein]-L-lysine.. It participates in protein modification; protein ubiquitination. The chain is RING-H2 finger protein ATL65 (ATL65) from Arabidopsis thaliana (Mouse-ear cress).